The chain runs to 75 residues: Small ribosomal subunit protein bS21 (75 aa).

Belongs to the bacterial ribosomal protein bS21 family.

The protein is Small ribosomal subunit protein bS21 of Brucella abortus (strain S19).